Here is a 683-residue protein sequence, read N- to C-terminus: uncharacterized protein (683 aa).

Coiled coils occupy residues 62–124 (PEHY…RKER), 155–259 (TTTN…KLSQ), and 346–376 (KKSLLTVKDSVQSLKTQLDELKRTLENDGDV). A disordered region spans residues 213–237 (QDQVESQTGPKKRRKSPIENQPTAG).

This is an uncharacterized protein from Invertebrate iridescent virus 3 (IIV-3).